A 607-amino-acid chain; its full sequence is WD repeat-containing protein 1 (607 aa).

13 WD repeats span residues 4-45 (ELKK…IRNI), 48-87 (PAIA…IWDT), 93-135 (LLKY…LWDT), 138-176 (SVGE…FFEG), 180-218 (KFKF…LYDG), 224-263 (VGNL…IWDV), 270-306 (TTFH…YLDK), 311-351 (RPLR…YWDA), 358-408 (TFTG…KMDV), 432-474 (LKDK…LYSI), 480-518 (KDEG…VFNV), 523-561 (SEQN…VWTL), and 566-604 (ARIK…QWTV).

This sequence belongs to the WD repeat AIP1 family.

Its subcellular location is the cell membrane. It is found in the cytoplasm. It localises to the cytoskeleton. The protein resides in the nucleus. Functionally, induces disassembly of actin filaments in conjunction with ADF/cofilin family proteins. Doesn't sever actin filaments alone, but caps the barbed ends of filaments severed by cofilin, which blocks annealing and depolymerization and allows more extensive severing by cofilin. The protein is WD repeat-containing protein 1 of Xenopus tropicalis (Western clawed frog).